A 195-amino-acid chain; its full sequence is Pyruvoyl-dependent arginine decarboxylase AaxB (195 aa).

S53 is modified (pyruvic acid (Ser)).

Belongs to the pyruvoyl-dependent arginine decarboxylase family. Trimer of an alpha-beta dimer. It depends on pyruvate as a cofactor.

It is found in the cytoplasm. The catalysed reaction is L-arginine + H(+) = agmatine + CO2. Its activity is regulated as follows. Inhibited by argininamide. Functionally, part of the AaxABC system, catalyzes the decarboxylation of L-arginine. The arginine uptake by the bacterium in the macrophage may be a virulence factor against the host innate immune response. The chain is Pyruvoyl-dependent arginine decarboxylase AaxB (aaxB) from Chlamydia pneumoniae (Chlamydophila pneumoniae).